An 833-amino-acid chain; its full sequence is Leucine--tRNA ligase (833 aa).

The 'HIGH' region motif lies at 41 to 52 (PYPSGAGLHVGH). Positions 610 to 614 (KMSKS) match the 'KMSKS' region motif. Lysine 613 is a binding site for ATP.

Belongs to the class-I aminoacyl-tRNA synthetase family.

The protein localises to the cytoplasm. It catalyses the reaction tRNA(Leu) + L-leucine + ATP = L-leucyl-tRNA(Leu) + AMP + diphosphate. The polypeptide is Leucine--tRNA ligase (Streptococcus pyogenes serotype M49 (strain NZ131)).